A 273-amino-acid polypeptide reads, in one-letter code: Dermonecrotic toxin LspaSicTox-alphaIA1ii (273 aa).

The active site involves H5. Positions 25 and 27 each coordinate Mg(2+). H41 functions as the Nucleophile in the catalytic mechanism. 2 cysteine pairs are disulfide-bonded: C45–C51 and C47–C190. D85 contacts Mg(2+).

This sequence belongs to the arthropod phospholipase D family. Class II subfamily. Requires Mg(2+) as cofactor. As to expression, expressed by the venom gland.

Its subcellular location is the secreted. The catalysed reaction is an N-(acyl)-sphingosylphosphocholine = an N-(acyl)-sphingosyl-1,3-cyclic phosphate + choline. It carries out the reaction an N-(acyl)-sphingosylphosphoethanolamine = an N-(acyl)-sphingosyl-1,3-cyclic phosphate + ethanolamine. It catalyses the reaction a 1-acyl-sn-glycero-3-phosphocholine = a 1-acyl-sn-glycero-2,3-cyclic phosphate + choline. The enzyme catalyses a 1-acyl-sn-glycero-3-phosphoethanolamine = a 1-acyl-sn-glycero-2,3-cyclic phosphate + ethanolamine. Its function is as follows. Dermonecrotic toxins cleave the phosphodiester linkage between the phosphate and headgroup of certain phospholipids (sphingolipid and lysolipid substrates), forming an alcohol (often choline) and a cyclic phosphate. This toxin acts on sphingomyelin (SM). It may also act on ceramide phosphoethanolamine (CPE), lysophosphatidylcholine (LPC) and lysophosphatidylethanolamine (LPE), but not on lysophosphatidylserine (LPS), and lysophosphatidylglycerol (LPG). It acts by transphosphatidylation, releasing exclusively cyclic phosphate products as second products. Induces dermonecrosis, hemolysis, increased vascular permeability, edema, inflammatory response, and platelet aggregation. The sequence is that of Dermonecrotic toxin LspaSicTox-alphaIA1ii from Loxosceles spadicea (Recluse spider).